We begin with the raw amino-acid sequence, 180 residues long: MSSKNVKVAKPYADAFIEIANKGSVINDLNCIATALSESKDLQKAIANPLVSSAAKKDIIKSIFAGNVDENTVKFMMVLCDRGRIEYLDAIAETALILAYKQASIEMAYVASSVKLSSAQTEALVDKLKAMTKADQIKLELKVDESLIGGFKVQIGSRIIDTSVQNQLKQLSSYLGASVA.

Belongs to the ATPase delta chain family. In terms of assembly, F-type ATPases have 2 components, F(1) - the catalytic core - and F(0) - the membrane proton channel. F(1) has five subunits: alpha(3), beta(3), gamma(1), delta(1), epsilon(1). CF(0) has four main subunits: a(1), b(1), b'(1) and c(10-14). The alpha and beta chains form an alternating ring which encloses part of the gamma chain. F(1) is attached to F(0) by a central stalk formed by the gamma and epsilon chains, while a peripheral stalk is formed by the delta, b and b' chains.

The protein resides in the plastid. The protein localises to the chloroplast thylakoid membrane. F(1)F(0) ATP synthase produces ATP from ADP in the presence of a proton or sodium gradient. F-type ATPases consist of two structural domains, F(1) containing the extramembraneous catalytic core and F(0) containing the membrane proton channel, linked together by a central stalk and a peripheral stalk. During catalysis, ATP synthesis in the catalytic domain of F(1) is coupled via a rotary mechanism of the central stalk subunits to proton translocation. Its function is as follows. This protein is part of the stalk that links CF(0) to CF(1). It either transmits conformational changes from CF(0) to CF(1) or is implicated in proton conduction. This Rhodomonas salina (Cryptomonas salina) protein is ATP synthase subunit delta, chloroplastic.